Reading from the N-terminus, the 204-residue chain is Putative copper-binding protein (204 aa).

Residues cysteine 77, cysteine 81, and histidine 166 each contribute to the Cu cation site.

Belongs to the SCO1/2 family.

This chain is Putative copper-binding protein (scoP), found in Stutzerimonas stutzeri (Pseudomonas stutzeri).